The chain runs to 293 residues: Nitrogenase iron protein (293 aa).

Gly-10–Ser-17 contributes to the ATP binding site. [4Fe-4S] cluster is bound at residue Cys-98. Arg-101 bears the ADP-ribosylarginine; by dinitrogenase reductase ADP-ribosyltransferase mark. Cys-133 provides a ligand contact to [4Fe-4S] cluster.

It belongs to the NifH/BchL/ChlL family. In terms of assembly, homodimer. Requires [4Fe-4S] cluster as cofactor. The reversible ADP-ribosylation of Arg-101 inactivates the nitrogenase reductase and regulates nitrogenase activity.

The catalysed reaction is N2 + 8 reduced [2Fe-2S]-[ferredoxin] + 16 ATP + 16 H2O = H2 + 8 oxidized [2Fe-2S]-[ferredoxin] + 2 NH4(+) + 16 ADP + 16 phosphate + 6 H(+). In terms of biological role, the key enzymatic reactions in nitrogen fixation are catalyzed by the nitrogenase complex, which has 2 components: the iron protein and the molybdenum-iron protein. In Pectobacterium atrosepticum (strain SCRI 1043 / ATCC BAA-672) (Erwinia carotovora subsp. atroseptica), this protein is Nitrogenase iron protein.